The following is a 274-amino-acid chain: Phosphate import ATP-binding protein PstB (274 aa).

A compositionally biased stretch (polar residues) spans 1–11 (MSEISIATSVP). The disordered stretch occupies residues 1 to 21 (MSEISIATSVPSGPGPLIGNQ). The ABC transporter domain occupies 28 to 269 (VIVRDLNFYY…PNDRRTQDYI (242 aa)). Residue 60–67 (GPSGCGKS) coordinates ATP.

The protein belongs to the ABC transporter superfamily. Phosphate importer (TC 3.A.1.7) family. As to quaternary structure, the complex is composed of two ATP-binding proteins (PstB), two transmembrane proteins (PstC and PstA) and a solute-binding protein (PstS).

Its subcellular location is the cell inner membrane. The enzyme catalyses phosphate(out) + ATP + H2O = ADP + 2 phosphate(in) + H(+). Part of the ABC transporter complex PstSACB involved in phosphate import. Responsible for energy coupling to the transport system. The polypeptide is Phosphate import ATP-binding protein PstB (Rhodopseudomonas palustris (strain BisB5)).